Consider the following 116-residue polypeptide: MAGRSGDNDDQLLLAVRIIKILYQSNPYSKPNGSRQARRNRRRRWRARQNQIDSISERILSSCLGRPAEPVPLQLPPIERLRLDCSEDCGNSGTQGVGDPQISGEPCMVLGAGTKE.

Residue S5 is modified to Phosphoserine; by host CK2. Positions 18-26 (IIKILYQSN) are homomultimerization. Residues 26–48 (NPYSKPNGSRQARRNRRRRWRAR) are disordered. The Nuclear localization signal and RNA-binding (RRE) motif lies at 34 to 50 (SRQARRNRRRRWRARQN). Residues 36-47 (QARRNRRRRWRA) are compositionally biased toward basic residues. A Nuclear export signal and binding to XPO1 motif is present at residues 73–84 (LQLPPIERLRLD). A Phosphoserine; by host modification is found at S92.

Belongs to the HIV-1 REV protein family. Homomultimer; when bound to the RRE. Multimeric assembly is essential for activity and may involve XPO1. Binds to human KPNB1, XPO1, TNPO1, RANBP5 and IPO7. Interacts with the viral Integrase. Interacts with human KHDRBS1. Interacts with human NAP1; this interaction decreases Rev multimerization and stimulates its activity. Interacts with human DEAD-box helicases DDX3 and DDX24; these interactions may serve for viral RNA export to the cytoplasm and packaging, respectively. Interacts with human PSIP1; this interaction may inhibit HIV-1 DNA integration by promoting dissociation of the Integrase-LEDGF/p75 complex. In terms of processing, asymmetrically arginine dimethylated at one site by host PRMT6. Methylation impairs the RNA-binding activity and export of viral RNA from the nucleus to the cytoplasm. Post-translationally, phosphorylated by protein kinase CK2. Presence of, and maybe binding to the N-terminus of the regulatory beta subunit of CK2 is necessary for CK2-mediated Rev's phosphorylation.

Its subcellular location is the host nucleus. The protein localises to the host nucleolus. It localises to the host cytoplasm. Functionally, escorts unspliced or incompletely spliced viral pre-mRNAs (late transcripts) out of the nucleus of infected cells. These pre-mRNAs carry a recognition sequence called Rev responsive element (RRE) located in the env gene, that is not present in fully spliced viral mRNAs (early transcripts). This function is essential since most viral proteins are translated from unspliced or partially spliced pre-mRNAs which cannot exit the nucleus by the pathway used by fully processed cellular mRNAs. Rev itself is translated from a fully spliced mRNA that readily exits the nucleus. Rev's nuclear localization signal (NLS) binds directly to KPNB1/Importin beta-1 without previous binding to KPNA1/Importin alpha-1. KPNB1 binds to the GDP bound form of RAN (Ran-GDP) and targets Rev to the nucleus. In the nucleus, the conversion from Ran-GDP to Ran-GTP dissociates Rev from KPNB1 and allows Rev's binding to the RRE in viral pre-mRNAs. Rev multimerization on the RRE via cooperative assembly exposes its nuclear export signal (NES) to the surface. Rev can then form a complex with XPO1/CRM1 and Ran-GTP, leading to nuclear export of the complex. Conversion from Ran-GTP to Ran-GDP mediates dissociation of the Rev/RRE/XPO1/RAN complex, so that Rev can return to the nucleus for a subsequent round of export. Beside KPNB1, also seems to interact with TNPO1/Transportin-1, RANBP5/IPO5 and IPO7/RANBP7 for nuclear import. The nucleoporin-like HRB/RIP is an essential cofactor that probably indirectly interacts with Rev to release HIV RNAs from the perinuclear region to the cytoplasm. In Homo sapiens (Human), this protein is Protein Rev.